Consider the following 381-residue polypeptide: Heme A synthase (381 aa).

The tract at residues 1 to 28 is disordered; the sequence is MSNRTIFEEVSSDSKQQSSPTPGGIDRK. A run of 8 helical transmembrane segments spans residues 36–56, 125–145, 151–171, 187–207, 230–250, 287–307, 320–340, and 344–364; these read IRVW…VGGL, VIGL…SIPT, LLLP…MVAS, LATH…YMFL, STGL…VAGI, LVQF…VVVW, FAFN…IVTV, and APVE…VLIL. Heme is bound at residue His-292. His-352 lines the heme pocket.

This sequence belongs to the COX15/CtaA family. Type 2 subfamily. As to quaternary structure, interacts with CtaB. Requires heme b as cofactor.

It is found in the cell membrane. The enzyme catalyses Fe(II)-heme o + 2 A + H2O = Fe(II)-heme a + 2 AH2. It participates in porphyrin-containing compound metabolism; heme A biosynthesis; heme A from heme O: step 1/1. Catalyzes the conversion of heme O to heme A by two successive hydroxylations of the methyl group at C8. The first hydroxylation forms heme I, the second hydroxylation results in an unstable dihydroxymethyl group, which spontaneously dehydrates, resulting in the formyl group of heme A. This is Heme A synthase from Ruegeria sp. (strain TM1040) (Silicibacter sp.).